The sequence spans 148 residues: Arginine repressor (148 aa).

It belongs to the ArgR family.

The protein resides in the cytoplasm. The protein operates within amino-acid biosynthesis; L-arginine biosynthesis [regulation]. Its function is as follows. Regulates arginine biosynthesis genes. This is Arginine repressor from Acidobacterium capsulatum (strain ATCC 51196 / DSM 11244 / BCRC 80197 / JCM 7670 / NBRC 15755 / NCIMB 13165 / 161).